We begin with the raw amino-acid sequence, 180 residues long: Putative adenylate kinase (180 aa).

5 residues coordinate ATP: Gly10, Gly12, Lys13, Thr14, and Thr15. The interval 30 to 50 is NMP; the sequence is NLRDFALEKGCGREVDGEVEV. Residues 99 to 109 form an LID region; it reads ERGYSKEKIGE. ATP is bound by residues Arg100 and Lys138.

This sequence belongs to the adenylate kinase family. AK6 subfamily. As to quaternary structure, interacts with uS11. Not a structural component of 40S pre-ribosomes, but transiently interacts with them by binding to uS11.

It catalyses the reaction AMP + ATP = 2 ADP. It carries out the reaction ATP + H2O = ADP + phosphate + H(+). Broad-specificity nucleoside monophosphate (NMP) kinase that catalyzes the reversible transfer of the terminal phosphate group between nucleoside triphosphates and monophosphates. Also has ATPase activity. Involved in the late maturation steps of the 30S ribosomal particles, specifically 16S rRNA maturation. While NMP activity is not required for ribosome maturation, ATPase activity is. Associates transiently with small ribosomal subunit protein uS11. ATP hydrolysis breaks the interaction with uS11. May temporarily remove uS11 from the ribosome to enable a conformational change of the ribosomal RNA that is needed for the final maturation step of the small ribosomal subunit. This chain is Putative adenylate kinase, found in Pyrococcus abyssi (strain GE5 / Orsay).